A 207-amino-acid chain; its full sequence is Sodium/potassium-transporting ATPase subunit beta-1-interacting protein 1 (207 aa).

Transmembrane regions (helical) follow at residues 2-22 (GRCS…AAAL), 35-55 (APIL…LGTL), and 62-82 (LILY…IICF). Asn-100 is a glycosylation site (N-linked (GlcNAc...) asparagine). The helical transmembrane segment at 147–167 (ALSSALQIFLALFGFVYACYV) threads the bilayer.

It belongs to the NKAIN family. As to quaternary structure, interacts with atp1b1 C-terminus.

Its subcellular location is the cell membrane. In Xenopus laevis (African clawed frog), this protein is Sodium/potassium-transporting ATPase subunit beta-1-interacting protein 1 (nkain1).